The following is a 314-amino-acid chain: 4-hydroxy-3-methylbut-2-enyl diphosphate reductase (314 aa).

Cys12 serves as a coordination point for [4Fe-4S] cluster. Positions 41 and 74 each coordinate (2E)-4-hydroxy-3-methylbut-2-enyl diphosphate. The dimethylallyl diphosphate site is built by His41 and His74. Residues His41 and His74 each contribute to the isopentenyl diphosphate site. Residue Cys96 participates in [4Fe-4S] cluster binding. His124 is a binding site for (2E)-4-hydroxy-3-methylbut-2-enyl diphosphate. Dimethylallyl diphosphate is bound at residue His124. His124 provides a ligand contact to isopentenyl diphosphate. Glu126 acts as the Proton donor in catalysis. Residue Thr167 coordinates (2E)-4-hydroxy-3-methylbut-2-enyl diphosphate. A [4Fe-4S] cluster-binding site is contributed by Cys197. Positions 225, 226, 227, and 269 each coordinate (2E)-4-hydroxy-3-methylbut-2-enyl diphosphate. The dimethylallyl diphosphate site is built by Ser225, Ser226, Asn227, and Ser269. Ser225, Ser226, Asn227, and Ser269 together coordinate isopentenyl diphosphate.

The protein belongs to the IspH family. [4Fe-4S] cluster serves as cofactor.

It catalyses the reaction isopentenyl diphosphate + 2 oxidized [2Fe-2S]-[ferredoxin] + H2O = (2E)-4-hydroxy-3-methylbut-2-enyl diphosphate + 2 reduced [2Fe-2S]-[ferredoxin] + 2 H(+). The enzyme catalyses dimethylallyl diphosphate + 2 oxidized [2Fe-2S]-[ferredoxin] + H2O = (2E)-4-hydroxy-3-methylbut-2-enyl diphosphate + 2 reduced [2Fe-2S]-[ferredoxin] + 2 H(+). The protein operates within isoprenoid biosynthesis; dimethylallyl diphosphate biosynthesis; dimethylallyl diphosphate from (2E)-4-hydroxy-3-methylbutenyl diphosphate: step 1/1. It participates in isoprenoid biosynthesis; isopentenyl diphosphate biosynthesis via DXP pathway; isopentenyl diphosphate from 1-deoxy-D-xylulose 5-phosphate: step 6/6. In terms of biological role, catalyzes the conversion of 1-hydroxy-2-methyl-2-(E)-butenyl 4-diphosphate (HMBPP) into a mixture of isopentenyl diphosphate (IPP) and dimethylallyl diphosphate (DMAPP). Acts in the terminal step of the DOXP/MEP pathway for isoprenoid precursor biosynthesis. The protein is 4-hydroxy-3-methylbut-2-enyl diphosphate reductase of Psychromonas ingrahamii (strain DSM 17664 / CCUG 51855 / 37).